Here is a 537-residue protein sequence, read N- to C-terminus: O-phosphoserine--tRNA(Cys) ligase (537 aa).

Substrate is bound by residues 186–188 (HMT), 231–233 (SAS), 273–274 (YY), and asparagine 317.

Belongs to the class-II aminoacyl-tRNA synthetase family. O-phosphoseryl-tRNA(Cys) synthetase subfamily. As to quaternary structure, homotetramer. Interacts with SepCysS.

It catalyses the reaction tRNA(Cys) + O-phospho-L-serine + ATP = O-phospho-L-seryl-tRNA(Cys) + AMP + diphosphate. Its function is as follows. Catalyzes the attachment of O-phosphoserine (Sep) to tRNA(Cys). This Methanococcus maripaludis (strain DSM 14266 / JCM 13030 / NBRC 101832 / S2 / LL) protein is O-phosphoserine--tRNA(Cys) ligase.